The following is a 218-amino-acid chain: Deoxyribose-phosphate aldolase (218 aa).

Asp-89 acts as the Proton donor/acceptor in catalysis. The active-site Schiff-base intermediate with acetaldehyde is the Lys-152. Residue Lys-182 is the Proton donor/acceptor of the active site.

This sequence belongs to the DeoC/FbaB aldolase family. DeoC type 1 subfamily.

The protein resides in the cytoplasm. The enzyme catalyses 2-deoxy-D-ribose 5-phosphate = D-glyceraldehyde 3-phosphate + acetaldehyde. Its pathway is carbohydrate degradation; 2-deoxy-D-ribose 1-phosphate degradation; D-glyceraldehyde 3-phosphate and acetaldehyde from 2-deoxy-alpha-D-ribose 1-phosphate: step 2/2. In terms of biological role, catalyzes a reversible aldol reaction between acetaldehyde and D-glyceraldehyde 3-phosphate to generate 2-deoxy-D-ribose 5-phosphate. This chain is Deoxyribose-phosphate aldolase, found in Corynebacterium diphtheriae (strain ATCC 700971 / NCTC 13129 / Biotype gravis).